The sequence spans 370 residues: UDP-N-acetylglucosamine--N-acetylmuramyl-(pentapeptide) pyrophosphoryl-undecaprenol N-acetylglucosamine transferase (370 aa).

Residues 10-12 (TGG), asparagine 126, serine 200, isoleucine 255, and glutamine 300 contribute to the UDP-N-acetyl-alpha-D-glucosamine site.

It belongs to the glycosyltransferase 28 family. MurG subfamily.

The protein localises to the cell membrane. It catalyses the reaction Mur2Ac(oyl-L-Ala-gamma-D-Glu-L-Lys-D-Ala-D-Ala)-di-trans,octa-cis-undecaprenyl diphosphate + UDP-N-acetyl-alpha-D-glucosamine = beta-D-GlcNAc-(1-&gt;4)-Mur2Ac(oyl-L-Ala-gamma-D-Glu-L-Lys-D-Ala-D-Ala)-di-trans,octa-cis-undecaprenyl diphosphate + UDP + H(+). Its pathway is cell wall biogenesis; peptidoglycan biosynthesis. Its function is as follows. Cell wall formation. Catalyzes the transfer of a GlcNAc subunit on undecaprenyl-pyrophosphoryl-MurNAc-pentapeptide (lipid intermediate I) to form undecaprenyl-pyrophosphoryl-MurNAc-(pentapeptide)GlcNAc (lipid intermediate II). The sequence is that of UDP-N-acetylglucosamine--N-acetylmuramyl-(pentapeptide) pyrophosphoryl-undecaprenol N-acetylglucosamine transferase from Lactobacillus johnsonii (strain CNCM I-12250 / La1 / NCC 533).